The chain runs to 62 residues: UPF0291 protein CLJ_B2839 (62 aa).

The protein belongs to the UPF0291 family.

The protein localises to the cytoplasm. The chain is UPF0291 protein CLJ_B2839 from Clostridium botulinum (strain 657 / Type Ba4).